The sequence spans 174 residues: MAEFHDDDSQFEEKSKSQIKRELHALQDLGERLTTLQPQLLERLPLTDPLRKALLEAPKHKAHIARKRHIQYIGKLMRDQDVDAIVALIDQVDSSTRQYNERFHALERWRDQLIAGGDAALDAFVGEFPECDRQHLRGLVRHAQHEAAHNKPPAAARKVFKYIRELDETKRGLR.

Belongs to the DarP family.

The protein localises to the cytoplasm. Member of a network of 50S ribosomal subunit biogenesis factors which assembles along the 30S-50S interface, preventing incorrect 23S rRNA structures from forming. Promotes peptidyl transferase center (PTC) maturation. The chain is Dual-action ribosomal maturation protein DarP from Pseudomonas aeruginosa (strain LESB58).